The chain runs to 219 residues: Proteasome subunit beta type-9 (219 aa).

The propeptide at 1–20 (MLRAGAPTAGSFRTEEVHTG) is removed in mature form. Threonine 21 (nucleophile) is an active-site residue. An N6-acetyllysine mark is found at lysine 53 and lysine 109.

This sequence belongs to the peptidase T1B family. As to quaternary structure, the 26S proteasome consists of a 20S proteasome core and two 19S regulatory subunits. The 20S proteasome core is composed of 28 subunits that are arranged in four stacked rings, resulting in a barrel-shaped structure. The two end rings are each formed by seven alpha subunits, and the two central rings are each formed by seven beta subunits. The catalytic chamber with the active sites is on the inside of the barrel. Component of the immunoproteasome, where it displaces the equivalent housekeeping subunit PSMB6. Component of the spermatoproteasome, a form of the proteasome specifically found in testis. Post-translationally, autocleaved. The resulting N-terminal Thr residue of the mature subunit is responsible for the nucleophile proteolytic activity.

It localises to the cytoplasm. It is found in the nucleus. It catalyses the reaction Cleavage of peptide bonds with very broad specificity.. The proteasome is a multicatalytic proteinase complex which is characterized by its ability to cleave peptides with Arg, Phe, Tyr, Leu, and Glu adjacent to the leaving group at neutral or slightly basic pH. The proteasome has an ATP-dependent proteolytic activity. This subunit is involved in antigen processing to generate class I binding peptides. The protein is Proteasome subunit beta type-9 (Psmb9) of Mus spicilegus (Steppe mouse).